Reading from the N-terminus, the 359-residue chain is Peptide chain release factor 1 (359 aa).

An N5-methylglutamine modification is found at glutamine 235. A disordered region spans residues 284-311; it reads KAESERSASRKNQVGSGDRSERIRTYNF.

It belongs to the prokaryotic/mitochondrial release factor family. In terms of processing, methylated by PrmC. Methylation increases the termination efficiency of RF1.

Its subcellular location is the cytoplasm. In terms of biological role, peptide chain release factor 1 directs the termination of translation in response to the peptide chain termination codons UAG and UAA. This chain is Peptide chain release factor 1, found in Bartonella quintana (strain Toulouse) (Rochalimaea quintana).